A 183-amino-acid chain; its full sequence is Large ribosomal subunit protein uL6 (183 aa).

Belongs to the universal ribosomal protein uL6 family. Part of the 50S ribosomal subunit.

In terms of biological role, this protein binds to the 23S rRNA, and is important in its secondary structure. It is located near the subunit interface in the base of the L7/L12 stalk, and near the tRNA binding site of the peptidyltransferase center. This is Large ribosomal subunit protein uL6 from Parabacteroides distasonis (strain ATCC 8503 / DSM 20701 / CIP 104284 / JCM 5825 / NCTC 11152).